The chain runs to 251 residues: Ubiquitin-conjugating enzyme E2 22 (251 aa).

A UBC core domain is found at 10 to 156 (NVIKQLAKEL…ARLYTGIHAK (147 aa)). The Glycyl thioester intermediate role is filled by Cys94. Over residues 230–240 (GLAKVQADKKK) the composition is skewed to basic and acidic residues. The tract at residues 230 to 251 (GLAKVQADKKKVDARKKSLKRL) is disordered. The stretch at 230–251 (GLAKVQADKKKVDARKKSLKRL) forms a coiled coil. Over residues 241-251 (VDARKKSLKRL) the composition is skewed to basic residues.

It belongs to the ubiquitin-conjugating enzyme family. Self-ubiquitinated. In terms of tissue distribution, expressed in seeds, pistils, siliques, hypocotyls and leaves.

The enzyme catalyses S-ubiquitinyl-[E1 ubiquitin-activating enzyme]-L-cysteine + [E2 ubiquitin-conjugating enzyme]-L-cysteine = [E1 ubiquitin-activating enzyme]-L-cysteine + S-ubiquitinyl-[E2 ubiquitin-conjugating enzyme]-L-cysteine.. The protein operates within protein modification; protein ubiquitination. Its function is as follows. Accepts the ubiquitin from the E1 complex and catalyzes its covalent attachment to other proteins. The polypeptide is Ubiquitin-conjugating enzyme E2 22 (UBC22) (Arabidopsis thaliana (Mouse-ear cress)).